The following is a 236-amino-acid chain: Small ribosomal subunit protein uS3 (236 aa).

The KH type-2 domain occupies isoleucine 39–arginine 107. Positions alanine 214–alanine 236 are disordered.

This sequence belongs to the universal ribosomal protein uS3 family. In terms of assembly, part of the 30S ribosomal subunit. Forms a tight complex with proteins S10 and S14.

In terms of biological role, binds the lower part of the 30S subunit head. Binds mRNA in the 70S ribosome, positioning it for translation. The sequence is that of Small ribosomal subunit protein uS3 from Brucella anthropi (strain ATCC 49188 / DSM 6882 / CCUG 24695 / JCM 21032 / LMG 3331 / NBRC 15819 / NCTC 12168 / Alc 37) (Ochrobactrum anthropi).